The sequence spans 288 residues: MNLRDKLDVYMRLARMDRPIGTLLLLWPCLMALTFAAGGLPDLKVFIIFVIGVFSMRACGCIINDYADRKLDAHVERTKGRPLASGEVSSKEALLLFVVMALFSFGLVLMLNPLVVQLSVIGIILTIIYPFTKRYTNMPQMFLGTVWSWSIPMAYAAQTGTVPVEAWWLFAANWCWTVAYDTMYAMVDRDDDLKVGIKSTAILFGRYDRQIIGLFQLAALSCFIIAGMVADRGAIYAVGILAFIGFGLYQQKLINGRERAPCFTAFLNNNWAGMVLFTALMLDYLVLG.

6 helical membrane-spanning segments follow: residues 20-40 (IGTLLLLWPCLMALTFAAGGL), 43-63 (LKVFIIFVIGVFSMRACGCII), 96-116 (LFVVMALFSFGLVLMLNPLVV), 210-230 (QIIGLFQLAALSCFIIAGMVA), 234-254 (AIYAVGILAFIGFGLYQQKLI), and 262-282 (CFTAFLNNNWAGMVLFTALML).

It belongs to the UbiA prenyltransferase family. The cofactor is Mg(2+).

It localises to the cell inner membrane. It catalyses the reaction all-trans-octaprenyl diphosphate + 4-hydroxybenzoate = 4-hydroxy-3-(all-trans-octaprenyl)benzoate + diphosphate. It functions in the pathway cofactor biosynthesis; ubiquinone biosynthesis. In terms of biological role, catalyzes the prenylation of para-hydroxybenzoate (PHB) with an all-trans polyprenyl group. Mediates the second step in the final reaction sequence of ubiquinone-8 (UQ-8) biosynthesis, which is the condensation of the polyisoprenoid side chain with PHB, generating the first membrane-bound Q intermediate 3-octaprenyl-4-hydroxybenzoate. The chain is 4-hydroxybenzoate octaprenyltransferase from Shewanella pealeana (strain ATCC 700345 / ANG-SQ1).